The following is a 151-amino-acid chain: Putative pre-16S rRNA nuclease (151 aa).

The protein belongs to the YqgF nuclease family.

The protein localises to the cytoplasm. In terms of biological role, could be a nuclease involved in processing of the 5'-end of pre-16S rRNA. In Neisseria gonorrhoeae (strain ATCC 700825 / FA 1090), this protein is Putative pre-16S rRNA nuclease.